The following is a 607-amino-acid chain: UvrABC system protein C (607 aa).

In terms of domain architecture, GIY-YIG spans 16-94 (GRPGVYRMFD…IKEWRPPYNI (79 aa)). In terms of domain architecture, UVR spans 203-238 (QQLGNELNAEMEKAAMALDFEKAAELRDQIALLRRV).

It belongs to the UvrC family. Interacts with UvrB in an incision complex.

The protein resides in the cytoplasm. In terms of biological role, the UvrABC repair system catalyzes the recognition and processing of DNA lesions. UvrC both incises the 5' and 3' sides of the lesion. The N-terminal half is responsible for the 3' incision and the C-terminal half is responsible for the 5' incision. The polypeptide is UvrABC system protein C (Pseudomonas putida (strain ATCC 700007 / DSM 6899 / JCM 31910 / BCRC 17059 / LMG 24140 / F1)).